The primary structure comprises 262 residues: Electron transfer flavoprotein beta subunit lysine methyltransferase (262 aa).

The transit peptide at 1–38 directs the protein to the mitochondrion; it reads MALSLGWKAHRNHCGLLLQALRSSGLLLFPCGQCPWRG.

Belongs to the methyltransferase superfamily. ETFBKMT family. As to quaternary structure, interacts with HSPD1; this protein may possibly be a methylation substrate.

Its subcellular location is the cytoplasm. It is found in the mitochondrion matrix. The enzyme catalyses L-lysyl-[protein] + 3 S-adenosyl-L-methionine = N(6),N(6),N(6)-trimethyl-L-lysyl-[protein] + 3 S-adenosyl-L-homocysteine + 3 H(+). In terms of biological role, protein-lysine methyltransferase that selectively trimethylates the flavoprotein ETFB in mitochondria. Thereby, may negatively regulate the function of ETFB in electron transfer from Acyl-CoA dehydrogenases to the main respiratory chain. The sequence is that of Electron transfer flavoprotein beta subunit lysine methyltransferase from Homo sapiens (Human).